A 542-amino-acid polypeptide reads, in one-letter code: CTP synthase (542 aa).

The amidoligase domain stretch occupies residues 1–265 (MARYVFITGG…DSEVLCAFGI (265 aa)). S13 provides a ligand contact to CTP. UTP is bound at residue S13. 14–19 (SLGKGI) contributes to the ATP binding site. Residue Y54 participates in L-glutamine binding. ATP is bound at residue D71. The Mg(2+) site is built by D71 and E139. Residues 146–148 (DIE), 186–191 (KTKPTQ), and K222 each bind CTP. Residues 186-191 (KTKPTQ) and K222 contribute to the UTP site. One can recognise a Glutamine amidotransferase type-1 domain in the interval 291–541 (TIAVVGKYTG…IEAAVEQSRL (251 aa)). Residue A353 coordinates L-glutamine. Catalysis depends on C380, which acts as the Nucleophile; for glutamine hydrolysis. L-glutamine contacts are provided by residues 381–384 (FGMQ), E404, and R469. Catalysis depends on residues H514 and E516.

It belongs to the CTP synthase family. Homotetramer.

The catalysed reaction is UTP + L-glutamine + ATP + H2O = CTP + L-glutamate + ADP + phosphate + 2 H(+). It catalyses the reaction L-glutamine + H2O = L-glutamate + NH4(+). The enzyme catalyses UTP + NH4(+) + ATP = CTP + ADP + phosphate + 2 H(+). It participates in pyrimidine metabolism; CTP biosynthesis via de novo pathway; CTP from UDP: step 2/2. Its activity is regulated as follows. Allosterically activated by GTP, when glutamine is the substrate; GTP has no effect on the reaction when ammonia is the substrate. The allosteric effector GTP functions by stabilizing the protein conformation that binds the tetrahedral intermediate(s) formed during glutamine hydrolysis. Inhibited by the product CTP, via allosteric rather than competitive inhibition. Functionally, catalyzes the ATP-dependent amination of UTP to CTP with either L-glutamine or ammonia as the source of nitrogen. Regulates intracellular CTP levels through interactions with the four ribonucleotide triphosphates. This Bartonella tribocorum (strain CIP 105476 / IBS 506) protein is CTP synthase.